We begin with the raw amino-acid sequence, 53 residues long: Small polypeptide DEVIL 7 (53 aa).

Positions 1–16 (MREKYTKEEAVKNWEK) are enriched in basic and acidic residues. The tract at residues 1–28 (MREKYTKEEAVKNWEKKKNKPSSPKGVG) is disordered. A required for DVL/RTFL small polypeptide activity region spans residues 22 to 53 (SSPKGVGEFLKKKKGRFYIIGKCITMLLCSHK). The chain crosses the membrane as a helical span at residues 30-46 (FLKKKKGRFYIIGKCIT).

It belongs to the DVL/RTFL small polypeptides family.

It localises to the cell membrane. In terms of biological role, small polypeptide acting as a regulatory molecule which coordinates cellular responses required for differentiation, growth and development, probably by restricting polar cell proliferation in lateral organs and coordinating socket cell recruitment and differentiation at trichome sites. The sequence is that of Small polypeptide DEVIL 7 from Arabidopsis thaliana (Mouse-ear cress).